The chain runs to 291 residues: MFIIELIKGIILGVVEGLTEFAPVSSTGHMILVDDMWLKSSEFLGSQSAFTFKIVIQLGSVFAAAWVFRERFLEILHIGKHKHVEGDNDQQRRSKPRRLNLLHVLVGMVPAGILGLLFDDFIEEHLFSVPTVMIGLFVGAIYMIIADKYSAKVKNPQTVDQISYFQAFVIGISQAVAMWPGFSRSGSTISTGVLMKLNHKAASDFTFIMAVPIMLAASGLSLLKHYQDIQIADIPFYILGFLAAFTVGLIAIKTFLHLINKIKLIPFAIYRIVLVIFIAILYFGFGIGKGI.

Transmembrane regions (helical) follow at residues 1 to 21 (MFII…LTEF), 48 to 68 (SAFT…AWVF), 102 to 122 (LHVL…DDFI), 126 to 146 (LFSV…MIIA), 162 to 182 (ISYF…WPGF), 203 to 223 (SDFT…LSLL), 231 to 251 (IADI…GLIA), and 267 to 287 (FAIY…GFGI).

The protein belongs to the UppP family.

The protein resides in the cell membrane. The enzyme catalyses di-trans,octa-cis-undecaprenyl diphosphate + H2O = di-trans,octa-cis-undecaprenyl phosphate + phosphate + H(+). In terms of biological role, catalyzes the dephosphorylation of undecaprenyl diphosphate (UPP). Confers resistance to bacitracin. This is Undecaprenyl-diphosphatase from Staphylococcus aureus (strain USA300).